The following is a 434-amino-acid chain: Enolase (434 aa).

Residues H158 and E167 each contribute to the substrate site. E210 acts as the Proton donor in catalysis. Residues D245, E294, and D319 each coordinate Mg(2+). Substrate-binding residues include E294 and D319. The active-site Proton acceptor is the K344. Substrate contacts are provided by residues 371 to 374 and K395; that span reads SHRS.

Belongs to the enolase family. Homodimer. It depends on Mg(2+) as a cofactor.

It is found in the cytoplasm. The enzyme catalyses (2R)-2-phosphoglycerate = phosphoenolpyruvate + H2O. It participates in carbohydrate degradation; glycolysis; pyruvate from D-glyceraldehyde 3-phosphate: step 4/5. The sequence is that of Enolase (ENO) from Schistosoma japonicum (Blood fluke).